The sequence spans 212 residues: Pyridoxine/pyridoxamine 5'-phosphate oxidase (212 aa).

The tract at residues 1–20 is disordered; it reads MSDSAMEPQNPLTSGDFTAA. FMN contacts are provided by residues 59 to 64, 74 to 75, Lys81, and Gln103; these read RMVLLK and YT. Lys64 provides a ligand contact to substrate. Residues Tyr121, Arg125, and Ser129 each coordinate substrate. Residues 138–139 and Trp183 each bind FMN; that span reads QS. 189 to 191 contacts substrate; that stretch reads RLH. Arg193 is a binding site for FMN.

The protein belongs to the pyridoxamine 5'-phosphate oxidase family. Homodimer. Requires FMN as cofactor.

The enzyme catalyses pyridoxamine 5'-phosphate + O2 + H2O = pyridoxal 5'-phosphate + H2O2 + NH4(+). The catalysed reaction is pyridoxine 5'-phosphate + O2 = pyridoxal 5'-phosphate + H2O2. Its pathway is cofactor metabolism; pyridoxal 5'-phosphate salvage; pyridoxal 5'-phosphate from pyridoxamine 5'-phosphate: step 1/1. It participates in cofactor metabolism; pyridoxal 5'-phosphate salvage; pyridoxal 5'-phosphate from pyridoxine 5'-phosphate: step 1/1. In terms of biological role, catalyzes the oxidation of either pyridoxine 5'-phosphate (PNP) or pyridoxamine 5'-phosphate (PMP) into pyridoxal 5'-phosphate (PLP). The protein is Pyridoxine/pyridoxamine 5'-phosphate oxidase of Azorhizobium caulinodans (strain ATCC 43989 / DSM 5975 / JCM 20966 / LMG 6465 / NBRC 14845 / NCIMB 13405 / ORS 571).